The chain runs to 328 residues: Malate dehydrogenase (328 aa).

Residue 12-18 participates in NAD(+) binding; it reads GAAGQIG. The substrate site is built by Arg-95 and Arg-101. NAD(+)-binding positions include Asn-108, Gln-115, and 132 to 134; that span reads VGN. Residues Asn-134 and Arg-165 each contribute to the substrate site. Residue His-190 is the Proton acceptor of the active site.

Belongs to the LDH/MDH superfamily. MDH type 2 family.

The enzyme catalyses (S)-malate + NAD(+) = oxaloacetate + NADH + H(+). Functionally, catalyzes the reversible oxidation of malate to oxaloacetate. The chain is Malate dehydrogenase from Polaromonas naphthalenivorans (strain CJ2).